The chain runs to 368 residues: Peptide chain release factor 2 (368 aa).

Q249 carries the N5-methylglutamine modification.

This sequence belongs to the prokaryotic/mitochondrial release factor family. Post-translationally, methylated by PrmC. Methylation increases the termination efficiency of RF2.

It localises to the cytoplasm. Functionally, peptide chain release factor 2 directs the termination of translation in response to the peptide chain termination codons UGA and UAA. This chain is Peptide chain release factor 2, found in Rhodococcus erythropolis (strain PR4 / NBRC 100887).